A 268-amino-acid chain; its full sequence is Ribosomal RNA small subunit methyltransferase A (268 aa).

S-adenosyl-L-methionine-binding residues include N18, L20, G45, E66, D91, and N112.

The protein belongs to the class I-like SAM-binding methyltransferase superfamily. rRNA adenine N(6)-methyltransferase family. RsmA subfamily.

The protein resides in the cytoplasm. It catalyses the reaction adenosine(1518)/adenosine(1519) in 16S rRNA + 4 S-adenosyl-L-methionine = N(6)-dimethyladenosine(1518)/N(6)-dimethyladenosine(1519) in 16S rRNA + 4 S-adenosyl-L-homocysteine + 4 H(+). Its function is as follows. Specifically dimethylates two adjacent adenosines (A1518 and A1519) in the loop of a conserved hairpin near the 3'-end of 16S rRNA in the 30S particle. May play a critical role in biogenesis of 30S subunits. The chain is Ribosomal RNA small subunit methyltransferase A from Shewanella putrefaciens (strain CN-32 / ATCC BAA-453).